The sequence spans 100 residues: Small ribosomal subunit protein uS14c (100 aa).

The protein belongs to the universal ribosomal protein uS14 family. As to quaternary structure, part of the 30S ribosomal subunit.

Its subcellular location is the plastid. The protein localises to the chloroplast. Its function is as follows. Binds 16S rRNA, required for the assembly of 30S particles. This chain is Small ribosomal subunit protein uS14c, found in Porphyra purpurea (Red seaweed).